Reading from the N-terminus, the 72-residue chain is uncharacterized protein (72 aa).

A helical membrane pass occupies residues 41–58 (FSFLVHIMCGLTLTSYVI).

Its subcellular location is the membrane. This is an uncharacterized protein from Dictyostelium discoideum (Social amoeba).